The following is a 271-amino-acid chain: uncharacterized protein (271 aa).

Residues 1–202 are disordered; sequence MLNSPGTRRP…APSSALSHQG (202 aa). Over residues 10-23 the composition is skewed to basic and acidic residues; sequence PVKEAQKYGEDSQK. 2 stretches are compositionally biased toward low complexity: residues 33–50 and 59–73; these read RSSVTTLSASALSDSSSP and GRPSTPARAPATSAP. Residues 92–101 show a composition bias toward polar residues; the sequence is TRSSANQLPQ. The segment covering 121-142 has biased composition (basic residues); it reads LRRRSHGDRCVPRSRRRPRPRP.

This is an uncharacterized protein from Homo sapiens (Human).